Consider the following 279-residue polypeptide: Large ribosomal subunit protein uL2 (279 aa).

Disordered stretches follow at residues 32-58 and 223-279; these read SLLTPLPKKGGRNAHGRITARHQGGGH and GVAM…RKRG. Composition is skewed to basic residues over residues 40–58 and 269–279; these read KGGRNAHGRITARHQGGGH and VRRRYATRKRG.

This sequence belongs to the universal ribosomal protein uL2 family. As to quaternary structure, part of the 50S ribosomal subunit. Forms a bridge to the 30S subunit in the 70S ribosome.

One of the primary rRNA binding proteins. Required for association of the 30S and 50S subunits to form the 70S ribosome, for tRNA binding and peptide bond formation. It has been suggested to have peptidyltransferase activity; this is somewhat controversial. Makes several contacts with the 16S rRNA in the 70S ribosome. In Salinispora tropica (strain ATCC BAA-916 / DSM 44818 / JCM 13857 / NBRC 105044 / CNB-440), this protein is Large ribosomal subunit protein uL2.